The primary structure comprises 955 residues: 2-oxoglutarate dehydrogenase E1 component (955 aa).

This sequence belongs to the alpha-ketoglutarate dehydrogenase family. As to quaternary structure, homodimer. Part of the 2-oxoglutarate dehydrogenase (OGDH) complex composed of E1 (2-oxoglutarate dehydrogenase), E2 (dihydrolipoamide succinyltransferase) and E3 (dihydrolipoamide dehydrogenase); the complex contains multiple copies of the three enzymatic components (E1, E2 and E3). The cofactor is thiamine diphosphate.

It carries out the reaction N(6)-[(R)-lipoyl]-L-lysyl-[protein] + 2-oxoglutarate + H(+) = N(6)-[(R)-S(8)-succinyldihydrolipoyl]-L-lysyl-[protein] + CO2. Its function is as follows. E1 component of the 2-oxoglutarate dehydrogenase (OGDH) complex which catalyzes the decarboxylation of 2-oxoglutarate, the first step in the conversion of 2-oxoglutarate to succinyl-CoA and CO(2). The chain is 2-oxoglutarate dehydrogenase E1 component from Bacillus cereus (strain ZK / E33L).